Reading from the N-terminus, the 239-residue chain is mRNA turnover protein 4 homolog (239 aa).

Residues 216–239 (QQMDDDLPESAPESEGESEEEDDS) form a disordered region. A compositionally biased stretch (acidic residues) spans 218–239 (MDDDLPESAPESEGESEEEDDS). Ser225, Ser229, and Ser233 each carry phosphoserine.

Belongs to the universal ribosomal protein uL10 family. As to quaternary structure, associates with the pre-60S ribosomal particle. Interacts with MINAS-60 (product of an alternative open reading frame of RBM10).

It localises to the nucleus. It is found in the nucleolus. Its subcellular location is the cytoplasm. In terms of biological role, component of the ribosome assembly machinery. Nuclear paralog of the ribosomal protein P0, it binds pre-60S subunits at an early stage of assembly in the nucleolus, and is replaced by P0 in cytoplasmic pre-60S subunits and mature 80S ribosomes. The polypeptide is mRNA turnover protein 4 homolog (Mrto4) (Mus musculus (Mouse)).